A 382-amino-acid chain; its full sequence is Succinyl-diaminopimelate desuccinylase (382 aa).

Zn(2+) is bound at residue histidine 70. The active site involves aspartate 72. Aspartate 103 lines the Zn(2+) pocket. The active-site Proton acceptor is glutamate 137. Positions 138, 166, and 355 each coordinate Zn(2+).

It belongs to the peptidase M20A family. DapE subfamily. In terms of assembly, homodimer. It depends on Zn(2+) as a cofactor. Co(2+) is required as a cofactor.

It catalyses the reaction N-succinyl-(2S,6S)-2,6-diaminopimelate + H2O = (2S,6S)-2,6-diaminopimelate + succinate. Its pathway is amino-acid biosynthesis; L-lysine biosynthesis via DAP pathway; LL-2,6-diaminopimelate from (S)-tetrahydrodipicolinate (succinylase route): step 3/3. Catalyzes the hydrolysis of N-succinyl-L,L-diaminopimelic acid (SDAP), forming succinate and LL-2,6-diaminopimelate (DAP), an intermediate involved in the bacterial biosynthesis of lysine and meso-diaminopimelic acid, an essential component of bacterial cell walls. This Paracoccus denitrificans (strain Pd 1222) protein is Succinyl-diaminopimelate desuccinylase.